A 43-amino-acid chain; its full sequence is Protein PsbN (43 aa).

A helical transmembrane segment spans residues 7 to 27 (VAIFISCLLVSFTGYALYTAF).

Belongs to the PsbN family.

It is found in the plastid. It localises to the chloroplast thylakoid membrane. May play a role in photosystem I and II biogenesis. In Huperzia lucidula (Shining clubmoss), this protein is Protein PsbN.